The primary structure comprises 374 residues: Dual-specificity RNA methyltransferase RlmN (374 aa).

Glu-94 serves as the catalytic Proton acceptor. A Radical SAM core domain is found at 100-339 (EEDRATLCVS…VTIRKTRGDD (240 aa)). The cysteines at positions 107 and 344 are disulfide-linked. Positions 114, 118, and 121 each coordinate [4Fe-4S] cluster. S-adenosyl-L-methionine contacts are provided by residues 168–169 (GE), Ser-200, 222–224 (SLH), and Asn-301. Cys-344 functions as the S-methylcysteine intermediate in the catalytic mechanism.

The protein belongs to the radical SAM superfamily. RlmN family. The cofactor is [4Fe-4S] cluster.

It localises to the cytoplasm. It carries out the reaction adenosine(2503) in 23S rRNA + 2 reduced [2Fe-2S]-[ferredoxin] + 2 S-adenosyl-L-methionine = 2-methyladenosine(2503) in 23S rRNA + 5'-deoxyadenosine + L-methionine + 2 oxidized [2Fe-2S]-[ferredoxin] + S-adenosyl-L-homocysteine. It catalyses the reaction adenosine(37) in tRNA + 2 reduced [2Fe-2S]-[ferredoxin] + 2 S-adenosyl-L-methionine = 2-methyladenosine(37) in tRNA + 5'-deoxyadenosine + L-methionine + 2 oxidized [2Fe-2S]-[ferredoxin] + S-adenosyl-L-homocysteine. Specifically methylates position 2 of adenine 2503 in 23S rRNA and position 2 of adenine 37 in tRNAs. m2A2503 modification seems to play a crucial role in the proofreading step occurring at the peptidyl transferase center and thus would serve to optimize ribosomal fidelity. The sequence is that of Dual-specificity RNA methyltransferase RlmN from Vibrio vulnificus (strain CMCP6).